A 417-amino-acid polypeptide reads, in one-letter code: Phosphoglycerate kinase, cytosolic (417 aa).

12 residues coordinate (2R)-3-phosphoglycerate: Val-23, Asp-24, Phe-25, Asn-26, Arg-39, Ser-61, His-62, Gly-64, Arg-65, Arg-132, His-168, and Arg-169. ADP contacts are provided by Gly-214 and Ala-215. Gly-214 serves as a coordination point for CDP. Residues Ala-215 and Lys-216 each coordinate AMP. Ala-215 is a binding site for ATP. Ala-215 contacts Mg(2+). Position 216 (Lys-216) interacts with (2R)-3-phosphoglycerate. Asp-219 lines the CDP pocket. Residue Asp-219 coordinates Mg(2+). Lys-220 and Gly-238 together coordinate ADP. Lys-220 is an AMP binding site. Lys-220 is an ATP binding site. Residue Gly-238 participates in CDP binding. AMP is bound by residues Ala-239 and Ala-311. ATP-binding residues include Ala-239 and Ala-311. Residues Ala-311 and Asn-335 each contribute to the ADP site. The CDP site is built by Gly-336 and Phe-341. 4 residues coordinate ADP: Phe-341, Glu-342, Asp-374, and Thr-375. Glu-342 lines the AMP pocket. The ATP site is built by Glu-342, Asp-374, and Thr-375. Asp-374 contacts Mg(2+).

It belongs to the phosphoglycerate kinase family. As to quaternary structure, monomer. Mg(2+) is required as a cofactor.

It localises to the cytoplasm. It catalyses the reaction (2R)-3-phosphoglycerate + ATP = (2R)-3-phospho-glyceroyl phosphate + ADP. It participates in carbohydrate degradation; glycolysis; pyruvate from D-glyceraldehyde 3-phosphate: step 2/5. The sequence is that of Phosphoglycerate kinase, cytosolic (PGKB) from Crithidia fasciculata.